We begin with the raw amino-acid sequence, 329 residues long: Anthranilate phosphoribosyltransferase (329 aa).

Residues Gly-78, 81–82 (GD), 88–91 (NLST), 106–114 (KHGNRAASS), and Ser-118 each bind 5-phospho-alpha-D-ribose 1-diphosphate. Position 78 (Gly-78) interacts with anthranilate. Ser-90 contacts Mg(2+). Residue Asn-109 participates in anthranilate binding. Arg-164 contributes to the anthranilate binding site. Positions 221 and 222 each coordinate Mg(2+).

It belongs to the anthranilate phosphoribosyltransferase family. Homodimer. Requires Mg(2+) as cofactor.

It carries out the reaction N-(5-phospho-beta-D-ribosyl)anthranilate + diphosphate = 5-phospho-alpha-D-ribose 1-diphosphate + anthranilate. The protein operates within amino-acid biosynthesis; L-tryptophan biosynthesis; L-tryptophan from chorismate: step 2/5. Catalyzes the transfer of the phosphoribosyl group of 5-phosphorylribose-1-pyrophosphate (PRPP) to anthranilate to yield N-(5'-phosphoribosyl)-anthranilate (PRA). The chain is Anthranilate phosphoribosyltransferase from Thermus thermophilus (strain ATCC BAA-163 / DSM 7039 / HB27).